The following is a 220-amino-acid chain: Translation initiation factor 6 (220 aa).

The protein belongs to the eIF-6 family.

Functionally, binds to the 50S ribosomal subunit and prevents its association with the 30S ribosomal subunit to form the 70S initiation complex. The polypeptide is Translation initiation factor 6 (Methanoculleus marisnigri (strain ATCC 35101 / DSM 1498 / JR1)).